The sequence spans 304 residues: Nicotinamide/nicotinic acid mononucleotide adenylyltransferase 2 (304 aa).

The NAD(+) site is built by serine 16 and phenylalanine 17. Histidine 24 serves as a coordination point for ATP. Positions 92 and 95 each coordinate NAD(+). S-palmitoyl cysteine attachment occurs at residues cysteine 161 and cysteine 162. Residues glycine 197, aspartate 199, leucine 209, tryptophan 210, and arginine 229 each coordinate NAD(+). 268 to 271 contacts ATP; the sequence is TKSR.

It belongs to the eukaryotic NMN adenylyltransferase family. In terms of assembly, monomer. Requires Mg(2+) as cofactor.

The protein localises to the golgi apparatus membrane. Its subcellular location is the cytoplasmic vesicle membrane. It localises to the cytoplasm. The protein resides in the cell projection. It is found in the axon. The enzyme catalyses beta-nicotinamide D-ribonucleotide + ATP + H(+) = diphosphate + NAD(+). It carries out the reaction nicotinate beta-D-ribonucleotide + ATP + H(+) = deamido-NAD(+) + diphosphate. It participates in cofactor biosynthesis; NAD(+) biosynthesis; NAD(+) from nicotinamide D-ribonucleotide: step 1/1. Its pathway is cofactor biosynthesis; NAD(+) biosynthesis; deamido-NAD(+) from nicotinate D-ribonucleotide: step 1/1. Its function is as follows. Nicotinamide/nicotinate-nucleotide adenylyltransferase that acts as an axon maintenance factor. Axon survival factor required for the maintenance of healthy axons: acts by delaying Wallerian axon degeneration, an evolutionarily conserved process that drives the loss of damaged axons. Catalyzes the formation of NAD(+) from nicotinamide mononucleotide (NMN) and ATP. Can also use the deamidated form; nicotinic acid mononucleotide (NaMN) as substrate but with a lower efficiency. Also catalyzes the reverse reaction, i.e. the pyrophosphorolytic cleavage of NAD(+). For the pyrophosphorolytic activity prefers NAD(+), NADH and NaAD as substrates and degrades nicotinic acid adenine dinucleotide phosphate (NHD) less effectively. Also acts as an activator of ADP-ribosylation by supporting the catalytic activity of PARP16 and promoting mono-ADP-ribosylation of ribosomes by PARP16. May be involved in the maintenance of axonal integrity. This is Nicotinamide/nicotinic acid mononucleotide adenylyltransferase 2 (nmnat2) from Danio rerio (Zebrafish).